Here is a 274-residue protein sequence, read N- to C-terminus: Large ribosomal subunit protein uL2 (274 aa).

The interval 200 to 274 (HALEKSGKAG…SKYIIERRKK (75 aa)) is disordered. Composition is skewed to basic residues over residues 207-220 (KAGR…RPRN) and 255-274 (LKTR…RRKK).

The protein belongs to the universal ribosomal protein uL2 family. In terms of assembly, part of the 50S ribosomal subunit. Forms a bridge to the 30S subunit in the 70S ribosome.

One of the primary rRNA binding proteins. Required for association of the 30S and 50S subunits to form the 70S ribosome, for tRNA binding and peptide bond formation. It has been suggested to have peptidyltransferase activity; this is somewhat controversial. Makes several contacts with the 16S rRNA in the 70S ribosome. The chain is Large ribosomal subunit protein uL2 from Parabacteroides distasonis (strain ATCC 8503 / DSM 20701 / CIP 104284 / JCM 5825 / NCTC 11152).